Here is a 913-residue protein sequence, read N- to C-terminus: SUN domain-containing protein 1 (913 aa).

The tract at residues 1 to 139 is LMNA-binding; sequence MDFSRLHTYT…VLRHPVLDES (139 aa). Residues 1–415 lie on the Nuclear side of the membrane; it reads MDFSRLHTYT…LTRCLRNICK (415 aa). A phosphoserine mark is found at Ser48 and Ser66. Residues 69 to 81 show a composition bias toward polar residues; it reads SQAIDSHISTSRA. Residues 69-120 are disordered; sequence SQAIDSHISTSRATPAKGRETRTVKQRRSASKPAFSINHLSGKGLSSSTSHD. The span at 108-120 shows a compositional bias: low complexity; sequence LSGKGLSSSTSHD. Ser139 carries the post-translational modification Phosphoserine. The SYNE2-binding stretch occupies residues 209–302; that stretch reads SRVYSRDRTL…MTAGELSRVD (94 aa). The segment at 223–302 is EMD-binding; that stretch reads VSFYLDRTLW…MTAGELSRVD (80 aa). A helical transmembrane segment spans residues 416 to 436; it reads VFVLLLPLLLLLGAGVSLWGQ. At 437-913 the chain is on the perinuclear space side; that stretch reads GNFFSLLPVL…RFRVHGEPIQ (477 aa). A disordered region spans residues 456–485; it reads RVDDSKGMHRPGPLPPSPPPKVDHKASQWP. 2 coiled-coil regions span residues 491-533 and 563-638; these read GQKV…EGLS and HHDH…CEQA. Positions 703-913 are sufficient for interaction with SYNE1 and SYNE2; that stretch reads TSEAIVSAVN…RFRVHGEPIQ (211 aa). Residues 751–912 form the SUN domain; the sequence is GGSILSTRCS…YRFRVHGEPI (162 aa).

As to quaternary structure, core component of the LINC complex which is composed of inner nuclear membrane SUN domain-containing proteins coupled to outer nuclear membrane KASH domain-containing nesprins. SUN and KASH domain-containing proteins seem to bind each other promiscuously; however, differentially expression of LINC complex constituents is giving rise to specific assemblies. At least SUN1/2-containing core LINC complexes are proposed to be hexameric composed of three protomers of each KASH and SUN domain-containing protein. Interacts with KASH5 (via the last 22 amino acids); this interaction mediates KASH5 telomere localization by forming a SUN1:KASH5 LINC complex. Isoform 5 is proposed to form a non-nuclear spermatogenesis-specific LINC complex with SYNE3 during sperm head formation. Interacts with SYNE2 and SYNE1; probably forming respective LINC complexes. Interacts with A-type lamin with a strong preference for unprocessed A-type lamin compared with the mature protein. Interaction with lamins B1 and C is hardly detectable. Interacts with NAT10. Interacts with EMD and TSNAX. Associates with the nuclear pore complex (NPC). Interacts with CCDC79/TERB1; promoting the accumulation of the LINC complex complexes at the telomere-nuclear envelope attachment sites. Interacts with IRAG2. Interacts (via KASH domain) with TMEM258. In terms of processing, the disulfide bond with KASH domain-containing nesprins is required for stability of the respective LINC complexes under tensile forces. As to expression, widely expressed. Expressed in cochlear outer hair cells (at protein level). Seven isoforms are expressed in testis including testis-specific isoform 5. Isoform 5 is the only isoform expressed at the end of sperm differentiation. Six isoforms are expressed in muscle, heart and brain, four isoforms in kidney and three isoforms in liver.

It localises to the nucleus inner membrane. It is found in the cytoplasmic vesicle. The protein localises to the secretory vesicle. The protein resides in the acrosome outer membrane. Functionally, as a component of the LINC (LInker of Nucleoskeleton and Cytoskeleton) complex involved in the connection between the nuclear lamina and the cytoskeleton. The nucleocytoplasmic interactions established by the LINC complex play an important role in the transmission of mechanical forces across the nuclear envelope and in nuclear movement and positioning. Required for interkinetic nuclear migration (INM) and essential for nucleokinesis and centrosome-nucleus coupling during radial neuronal migration in the cerebral cortex and during glial migration. Involved in telomere attachment to nuclear envelope in the prophase of meiosis implicating a SUN1/2:KASH5 LINC complex in which SUN1 and SUN2 seem to act at least partial redundantly. Required for gametogenesis and involved in selective gene expression of coding and non-coding RNAs needed for gametogenesis. Helps to define the distribution of nuclear pore complexes (NPCs). Required for efficient localization of SYNE4 in the nuclear envelope. May be involved in nuclear remodeling during sperm head formation in spermatogenesis. May play a role in DNA repair by suppressing non-homologous end joining repair to facilitate the repair of DNA cross-links. Its function is as follows. Isoform 5 may be involved in nuclear remodeling during sperm head formation in spermatogenesis. A probable SUN1 isoform 5:SYNE3 LINC complex may tether spermatid nuclei to anterior cytoskeletal structures such as actin filaments present at membraneous junctions of spermatids and Sertoli cells. This Mus musculus (Mouse) protein is SUN domain-containing protein 1.